We begin with the raw amino-acid sequence, 981 residues long: Rab3 GTPase-activating protein catalytic subunit (981 aa).

Phosphoserine occurs at positions 83, 379, 536, 579, 581, and 590. Residues 532-558 (GKKTSLSDSTTSAYPGDAGKTGGQLGL) form a disordered region. The interval 591–614 (DTEDLKGNGQESGKKGGPKEMANL) is disordered. Position 664 is a phosphoserine (Ser664).

It belongs to the Rab3-GAP catalytic subunit family. In terms of assembly, the Rab3 GTPase-activating complex is a heterodimer composed of Rab3gap1 and Rab3gap2. The Rab3 GTPase-activating complex interacts with DMXL2. Interacts with LMAN1. As to expression, in the eye, it is highly expressed within the lens, particularly in the anterior lens epithelium and in a ring corresponding to the equatorial region where anterior cells are differentiating into lens fibers. Also highly expressed in the retina.

The protein localises to the cytoplasm. Its subcellular location is the endoplasmic reticulum. The protein resides in the golgi apparatus. It is found in the cis-Golgi network. Its function is as follows. Catalytic subunit of the Rab3 GTPase-activating (Rab3GAP) complex composed of RAB3GAP1 and RAB3GAP2, which has GTPase-activating protein (GAP) activity towards various Rab3 subfamily members (RAB3A, RAB3B, RAB3C and RAB3D), RAB5A and RAB43, and guanine nucleotide exchange factor (GEF) activity towards RAB18. As part of the Rab3GAP complex, acts as a GAP for Rab3 proteins by converting active RAB3-GTP to the inactive form RAB3-GDP. Rab3 proteins are involved in regulated exocytosis of neurotransmitters and hormones. The Rab3GAP complex, acts as a GEF for RAB18 by promoting the conversion of inactive RAB18-GDP to the active form RAB18-GTP. Recruits and stabilizes RAB18 at the cis-Golgi membrane where RAB18 is most likely activated. Also involved in RAB18 recruitment at the endoplasmic reticulum (ER) membrane where it maintains proper ER structure. Required for normal eye and brain development. May participate in neurodevelopmental processes such as proliferation, migration and differentiation before synapse formation, and non-synaptic vesicular release of neurotransmitters. The protein is Rab3 GTPase-activating protein catalytic subunit of Mus musculus (Mouse).